A 74-amino-acid polypeptide reads, in one-letter code: Omega-filistatoxin-Kh1a (74 aa).

Contains 6 disulfide bonds. Expressed by the venom gland.

It localises to the secreted. Its function is as follows. Potently blocks vertebrate calcium channels Cav1 and Cav2. Is the most active on Cav2.2/CACNA1B (from HEK) (IC(50)=2.3 nM), followed by Cav2.1/CACNA1A (IC(50)=4.3 nM), Cav2.2/CACNA1B (from oocyte) (IC(50)=14.4 nM), Cav1.2/CACNA1C (IC(50)=26.8 nM), and Cav2.3/CACNA1E (IC(50)=96.4 nM). The chain is Omega-filistatoxin-Kh1a from Kukulcania hibernalis (Southern house spider).